The sequence spans 1447 residues: ATP-dependent helicase SGS1 (1447 aa).

Disordered stretches follow at residues 37–78 (IANK…TATK), 243–264 (KKDG…QDDN), 342–430 (KEGA…EEKE), 552–572 (KENE…LSDS), and 601–639 (TERK…FDDD). Positions 59-78 (GTTNFITSIPASGPTNTATK) are enriched in polar residues. Basic and acidic residues predominate over residues 243–253 (KKDGMSKDQSK). Residues 254 to 264 (GRSQVSSQDDN) are compositionally biased toward polar residues. The span at 363–386 (ELTRRRNMRSREPVNYRIPDRDDP) shows a compositional bias: basic and acidic residues. Composition is skewed to acidic residues over residues 403-415 (EREE…EAED) and 552-561 (KENEDFEEDN). The span at 601 to 611 (TERKLTGDNEH) shows a compositional bias: basic and acidic residues. The 178-residue stretch at 687-864 (VNATLQGKDV…IHNLELKEPV (178 aa)) folds into the Helicase ATP-binding domain. An ATP-binding site is contributed by 714 to 721 (AVVKSGKT). The DEAH box signature appears at 808 to 811 (DEAH). Residues 886–1035 (TIFEICDAVK…NKEKHLNKLQ (150 aa)) form the Helicase C-terminal domain. One can recognise an HRDC domain in the interval 1272-1351 (LNNLRMTYER…ADLSKKRSSE (80 aa)). Positions 1402 to 1411 (QIRQSQLPKN) are enriched in polar residues. A disordered region spans residues 1402–1447 (QIRQSQLPKNTTSSKSGTRSISKSSKKSANGRRGFRNYRGHYRGRK). A compositionally biased stretch (low complexity) spans 1412–1424 (TTSSKSGTRSISK). Residues 1425-1447 (SSKKSANGRRGFRNYRGHYRGRK) are compositionally biased toward basic residues.

This sequence belongs to the helicase family. RecQ subfamily. As to quaternary structure, heterodimer with TOP3. Forms a complex with TOP3 and RMI1. Forms a ternary complex with a MLH1-MLH3 heterodimer (MutLbeta) during meiosis. Interacts with TOP2. The cofactor is Mg(2+).

It is found in the nucleus. The protein localises to the nucleolus. It catalyses the reaction Couples ATP hydrolysis with the unwinding of duplex DNA by translocating in the 3'-5' direction.. The enzyme catalyses ATP + H2O = ADP + phosphate + H(+). Helicase activity on G-quadruplex DNA is inhibited by ATP-gamma-S. In terms of biological role, ATP-dependent 3'-5' DNA helicase able to unwind duplex DNA or DNA:RNA heteroduplex. Unwinds G-quadruplex DNA; unwinding occurs in the 3'-5' direction, requires a 3' single-stranded end of at least 7 nucleotides. Helicase activity is higher on G-quadruplex substrates than on duplex DNA substrates. Assayed with a catalytic fragment (residues 400-1268). Telomeres and rDNA are notably G-rich; formation of G-quadruplex DNA would block DNA replication and transcription. Acts as an integral component of the S-phase checkpoint response, which arrests cells due to DNA damage or blocked fork progression during DNA replication. Can create a deleterious topological substrate that TOP3 preferentially resolves. The TOP3-SGS1 protein complex may function as a eukaryotic reverse gyrase introducing positive supercoils into extrachromosomal ribosomal DNA rings. Together with topoisomerase II has a role in chromosomal segregation. Maintains rDNA structure where it has a role in re-starting stalled replication forks. The polypeptide is ATP-dependent helicase SGS1 (Saccharomyces cerevisiae (strain ATCC 204508 / S288c) (Baker's yeast)).